Reading from the N-terminus, the 786-residue chain is Keratin, type I cytoskeletal 9 (786 aa).

Residues 1–21 (MNCRQFLSSHCSRDSSGGGGG) form a disordered region. The head stretch occupies residues 1 to 136 (MNCRQFLSSH…SGAGGILGAD (136 aa)). Ser52 is subject to Phosphoserine. Residues 137-172 (EKTTMQDLNSRLASYLDKVQALEDANKELESKIREW) are coil 1A. The region spanning 137 to 449 (EKTTMQDLNS…SLLEGGQEDF (313 aa)) is the IF rod domain. The linker 1 stretch occupies residues 173–191 (YDKQGSRTFHRDYSPYYDT). Positions 192–283 (IEDLKNQIVN…KNHEDEMSQL (92 aa)) are coil 1B. The linker 12 stretch occupies residues 284 to 306 (TGQNSGDVNVEMNAAPGRDLTKI). Residues 307-445 (LNDMREEYER…KTYRSLLEGG (139 aa)) are coil 2. Residues 446–760 (QEDFESHESG…GGGSGSKGGS (315 aa)) are tail. The interval 447 to 786 (EDFESHESGQ…DDTQGYHIQY (340 aa)) is disordered. 2 stretches are compositionally biased toward gly residues: residues 460 to 657 (GSGG…GGSG) and 664 to 761 (SSSG…GGSG). A compositionally biased stretch (low complexity) spans 762–773 (RSSQVQSSSSKS).

It belongs to the intermediate filament family. Heterotetramer of two type I and two type II keratins.

In terms of biological role, may serve an important special function either in the mature palmar and plantar skin tissue or in the morphogenetic program of the formation of these tissues. Plays a role in keratin filament assembly. This chain is Keratin, type I cytoskeletal 9, found in Canis lupus familiaris (Dog).